Reading from the N-terminus, the 183-residue chain is Ribosome-recycling factor (183 aa).

This sequence belongs to the RRF family.

It is found in the cytoplasm. In terms of biological role, responsible for the release of ribosomes from messenger RNA at the termination of protein biosynthesis. May increase the efficiency of translation by recycling ribosomes from one round of translation to another. The protein is Ribosome-recycling factor of Treponema pallidum (strain Nichols).